A 641-amino-acid polypeptide reads, in one-letter code: Serine/threonine-protein kinase PK-1 (641 aa).

The Protein kinase domain occupies 18–280; sequence YRVDARIAVG…ARARDARARL (263 aa). ATP contacts are provided by residues 24 to 32 and lysine 47; that span reads IAVGGMATV. Residue aspartate 141 is the Proton acceptor of the active site. The segment at 317–347 is disordered; sequence LPVNEEDEGADAAHRTSRFRSPPPLPPRGRT. 4 consecutive PASTA domains span residues 375-441, 442-508, 509-576, and 577-641; these read SGQF…TLSK, GPRT…LTVS, KGAP…TLSK, and GPEM…IEIR. Residues 469–494 are disordered; it reads KPGMSTREFSDSVPAGSVISTEPGKG.

This sequence belongs to the protein kinase superfamily. Ser/Thr protein kinase family. In terms of processing, autophosphorylated on threonine residue(s).

It catalyses the reaction L-seryl-[protein] + ATP = O-phospho-L-seryl-[protein] + ADP + H(+). The catalysed reaction is L-threonyl-[protein] + ATP = O-phospho-L-threonyl-[protein] + ADP + H(+). The sequence is that of Serine/threonine-protein kinase PK-1 (spk1) from Streptomyces toyocaensis.